The primary structure comprises 477 residues: Bifunctional protein HldE (477 aa).

Positions 1-318 (MKVTLSEFER…ENAVRGRADT (318 aa)) are ribokinase. Residue lysine 179 is modified to N6-acetyllysine. An ATP-binding site is contributed by 195–198 (NLSE). Aspartate 264 is an active-site residue. A cytidylyltransferase region spans residues 344 to 477 (MTNGVFDILH…IKKIQQDKKG (134 aa)).

This sequence in the N-terminal section; belongs to the carbohydrate kinase PfkB family. The protein in the C-terminal section; belongs to the cytidylyltransferase family. Homodimer.

It carries out the reaction D-glycero-beta-D-manno-heptose 7-phosphate + ATP = D-glycero-beta-D-manno-heptose 1,7-bisphosphate + ADP + H(+). The catalysed reaction is D-glycero-beta-D-manno-heptose 1-phosphate + ATP + H(+) = ADP-D-glycero-beta-D-manno-heptose + diphosphate. It participates in nucleotide-sugar biosynthesis; ADP-L-glycero-beta-D-manno-heptose biosynthesis; ADP-L-glycero-beta-D-manno-heptose from D-glycero-beta-D-manno-heptose 7-phosphate: step 1/4. Its pathway is nucleotide-sugar biosynthesis; ADP-L-glycero-beta-D-manno-heptose biosynthesis; ADP-L-glycero-beta-D-manno-heptose from D-glycero-beta-D-manno-heptose 7-phosphate: step 3/4. Catalyzes the phosphorylation of D-glycero-D-manno-heptose 7-phosphate at the C-1 position to selectively form D-glycero-beta-D-manno-heptose-1,7-bisphosphate. Functionally, catalyzes the ADP transfer from ATP to D-glycero-beta-D-manno-heptose 1-phosphate, yielding ADP-D-glycero-beta-D-manno-heptose. The polypeptide is Bifunctional protein HldE (Shigella boydii serotype 18 (strain CDC 3083-94 / BS512)).